We begin with the raw amino-acid sequence, 368 residues long: MNTFGQQPTNPHAQDLLDMAMYCDHFSLYHQQQNQQLPQRPAAPPALGYGRNEYSSPTASPYPWLNGPAMNSSPYLNGGSGSPYFPAGYGGGQRQFIPPSSGFGVADFPWLSIPNQADLLKMVRPPYSYSSLIAMAIQNNPEKKLTLSQIYSYVAENFPFYKKSKAGWQNSIRHNLSLNDCFKKVARDDNDPGKGNYWTLDPNCEKMFDNGNFRRKRKRKSESVEAGFDGDASEDKKELALKSLGSDSPRGASALEQSSYGTPESKSRPAGGLAALDSSHCFTNFASNMNALMNVGAPRHFSARLGDFSNSRHYLAELASCPISSPQISEPQTGSKVPCYPSKQASSLCTSVMNSFSLNHLYSREGEV.

The segment at 33 to 54 (QNQQLPQRPAAPPALGYGRNEY) is disordered. Positions 124–218 (RPPYSYSSLI…DNGNFRRKRK (95 aa)) form a DNA-binding region, fork-head. The interval 243–272 (SLGSDSPRGASALEQSSYGTPESKSRPAGG) is disordered. Positions 255–264 (LEQSSYGTPE) are enriched in polar residues.

It is found in the nucleus. In terms of biological role, possible transcriptional activator. The protein is Forkhead box protein I2 of Xenopus tropicalis (Western clawed frog).